The chain runs to 213 residues: Pyridoxine/pyridoxamine 5'-phosphate oxidase (213 aa).

Substrate-binding positions include 9-12 (RKDY) and K67. FMN is bound by residues 62 to 67 (RIVLLK), 77 to 78 (FT), R83, K84, and Q106. Substrate-binding residues include Y124, R128, and S132. Residues 141 to 142 (QS) and W186 each bind FMN. A substrate-binding site is contributed by 192 to 194 (RLH). R196 lines the FMN pocket.

It belongs to the pyridoxamine 5'-phosphate oxidase family. As to quaternary structure, homodimer. FMN is required as a cofactor.

The catalysed reaction is pyridoxamine 5'-phosphate + O2 + H2O = pyridoxal 5'-phosphate + H2O2 + NH4(+). The enzyme catalyses pyridoxine 5'-phosphate + O2 = pyridoxal 5'-phosphate + H2O2. The protein operates within cofactor metabolism; pyridoxal 5'-phosphate salvage; pyridoxal 5'-phosphate from pyridoxamine 5'-phosphate: step 1/1. It functions in the pathway cofactor metabolism; pyridoxal 5'-phosphate salvage; pyridoxal 5'-phosphate from pyridoxine 5'-phosphate: step 1/1. Its function is as follows. Catalyzes the oxidation of either pyridoxine 5'-phosphate (PNP) or pyridoxamine 5'-phosphate (PMP) into pyridoxal 5'-phosphate (PLP). The chain is Pyridoxine/pyridoxamine 5'-phosphate oxidase from Cyanothece sp. (strain PCC 7425 / ATCC 29141).